The primary structure comprises 344 residues: Beta-1,4-galactosyltransferase 4 (344 aa).

Residues 1–12 (MGCNPPYLLSYR) are Cytoplasmic-facing. A helical; Signal-anchor for type II membrane protein membrane pass occupies residues 13-38 (LRLLLLFTLCLTVLGWATSNYFVGAI). At 39 to 344 (QVIPRAKNFM…NITVDFWTAA (306 aa)) the chain is on the lumenal side. Cysteines 77 and 118 form a disulfide. UDP-alpha-D-galactose-binding positions include 129 to 133 (PHRNR), 168 to 170 (FNR), and 195 to 196 (VD). C189 and C208 are oxidised to a cystine. Residue D196 coordinates Mn(2+). N-linked (GlcNAc...) asparagine glycosylation occurs at N220. 2 residues coordinate UDP-alpha-D-galactose: Y224 and W256. 258 to 261 (GEDD) serves as a coordination point for N-acetyl-D-glucosamine. H289 contributes to the Mn(2+) binding site. Residue 289–291 (HTR) participates in UDP-alpha-D-galactose binding. R301 is an N-acetyl-D-glucosamine binding site. A glycan (N-linked (GlcNAc...) asparagine) is linked at N335.

Belongs to the glycosyltransferase 7 family. In terms of assembly, interacts with SLC35A2/UGT1. Requires Mn(2+) as cofactor.

It localises to the golgi apparatus membrane. Its subcellular location is the secreted. It carries out the reaction N-acetyl-D-glucosamine + UDP-alpha-D-galactose = beta-D-galactosyl-(1-&gt;4)-N-acetyl-D-glucosamine + UDP + H(+). The catalysed reaction is a beta-D-GlcNAc-(1-&gt;3)-beta-D-Gal-(1-&gt;4)-beta-D-Glc-(1&lt;-&gt;1)-Cer(d18:1(4E)) + UDP-alpha-D-galactose = a neolactoside nLc4Cer(d18:1(4E)) + UDP + H(+). It catalyses the reaction 3-O-{beta-D-galactosyl-(1-&gt;3)-[6-O-sulfo-N-acetyl-beta-D-glucosaminyl-(1-&gt;6)]-N-acetyl-alpha-D-galactosaminyl}-L-seryl-[protein] + UDP-alpha-D-galactose = 3-O-{beta-D-galactosyl-(1-&gt;3)-[beta-D-galactosyl-(1-&gt;4)-6-O-sulfo-N-acetyl-beta-D-glucosaminyl-(1-&gt;6)]-N-acetyl-alpha-D-galactosaminyl}-L-seryl-[protein] + UDP + H(+). The enzyme catalyses 3-O-{beta-D-galactosyl-(1-&gt;3)-[6-O-sulfo-N-acetyl-beta-D-glucosaminyl-(1-&gt;6)]-N-acetyl-alpha-D-galactosaminyl}-L-threonyl-[protein] + UDP-alpha-D-galactose = 3-O-{beta-D-galactosyl-(1-&gt;3)-[beta-D-galactosyl-(1-&gt;4)-6-O-sulfo-N-acetyl-beta-D-glucosaminyl-(1-&gt;6)]-N-acetyl-alpha-D-galactosaminyl}-L-threonyl-[protein] + UDP + H(+). Its pathway is protein modification; protein glycosylation. The protein operates within glycolipid biosynthesis. Functionally, galactose (Gal) transferase involved in the synthesis of terminal N-acetyllactosamine (LacNac) unit present on glycan chains of glycoproteins and glycosphingolipids. Catalyzes the transfer of Gal residue via a beta1-&gt;4 linkage from UDP-Gal to the non-reducing terminal N-acetyl glucosamine 6-O-sulfate (6-O-sulfoGlcNAc) in the linearly growing chain of both N- and O-linked keratan sulfate proteoglycans. Cooperates with B3GNT7 N-acetyl glucosamine transferase and CHST6 and CHST1 sulfotransferases to construct and elongate mono- and disulfated disaccharide units [-&gt;3Galbeta1-&gt;4(6-sulfoGlcNAcbeta)1-&gt;] and [-&gt;3(6-sulfoGalbeta)1-&gt;4(6-sulfoGlcNAcbeta)1-&gt;] within keratan sulfate polymer. Transfers Gal residue via a beta1-&gt;4 linkage to terminal 6-O-sulfoGlcNAc within the LacNac unit of core 2 O-glycans forming 6-sulfo-sialyl-Lewis X (sLex). May contribute to the generation of sLex epitope on mucin-type glycoproteins that serve as ligands for SELL/L-selectin, a major regulator of leukocyte migration. In the biosynthesis pathway of neolacto-series glycosphingolipids, transfers Gal residue via a beta1-&gt;4 linkage to terminal GlcNAc of a lactotriaosylceramide (Lc3Cer) acceptor to form a neolactotetraosylceramide. This Rattus norvegicus (Rat) protein is Beta-1,4-galactosyltransferase 4 (B4galt4).